Consider the following 327-residue polypeptide: MYQSLMTVRETQIAIKEVKTFFEDQLAKRLELFRVSAPLFVTKRSGLNDHLNGVERPIEFDMLHSGEELEIVHSLAKWKRFALHEYGYEAGEGLYTNMNAIRRDEELDATHSIYVDQWDWEKIVQKEWRTVDYLQKTVLTIYGIFKDLEDHLFEKYPFLGKYLPEEIVFVTSQELEDKYPELTPKDREHAIAKEHGAVFIIGIGDALRSGEKHDGRAADYDDWKLNGDILFWHPVLQSSFELSSMGIRVDSKSLDEQLTKTGEDFKREYDFHKGILEDVLPLTIGGGIGQSRMCMYFLRKAHIGEVQSSVWPDDLREACKKENIHLF.

This sequence belongs to the class-II aminoacyl-tRNA synthetase family. AsnA subfamily.

The protein localises to the cytoplasm. It carries out the reaction L-aspartate + NH4(+) + ATP = L-asparagine + AMP + diphosphate + H(+). It functions in the pathway amino-acid biosynthesis; L-asparagine biosynthesis; L-asparagine from L-aspartate (ammonia route): step 1/1. This Bacillus cereus (strain ATCC 10987 / NRS 248) protein is Aspartate--ammonia ligase.